Here is a 390-residue protein sequence, read N- to C-terminus: Na(+)/H(+) antiporter NhaA 2 (390 aa).

A run of 11 helical transmembrane segments spans residues Ile23–Ala43, Leu63–Ile83, Leu100–Thr120, Gly129–Gly149, Leu158–Phe178, Ser181–Val201, Ala208–Ile228, Gly265–Phe285, Leu293–Val313, Leu331–Leu351, and Glu362–Leu382.

This sequence belongs to the NhaA Na(+)/H(+) (TC 2.A.33) antiporter family.

The protein localises to the cell inner membrane. It catalyses the reaction Na(+)(in) + 2 H(+)(out) = Na(+)(out) + 2 H(+)(in). Na(+)/H(+) antiporter that extrudes sodium in exchange for external protons. The sequence is that of Na(+)/H(+) antiporter NhaA 2 from Novosphingobium aromaticivorans (strain ATCC 700278 / DSM 12444 / CCUG 56034 / CIP 105152 / NBRC 16084 / F199).